A 113-amino-acid chain; its full sequence is Na(+)/H(+) antiporter subunit C (113 aa).

3 consecutive transmembrane segments (helical) span residues 4 to 21 (LMAV…YLLL), 28 to 47 (VIIG…LTMG), and 67 to 89 (PLPQ…FILV).

It belongs to the CPA3 antiporters (TC 2.A.63) subunit C family. In terms of assembly, forms a heterooligomeric complex that consists of seven subunits: MrpA, MrpB, MrpC, MrpD, MrpE, MrpF and MrpG.

The protein localises to the cell membrane. Functionally, mrp complex is a Na(+)/H(+) antiporter that is considered to be the major Na(+) excretion system in B.subtilis. Has a major role in Na(+) resistance and a minor role in Na(+)- and K(+)-dependent pH homeostasis as compared to TetB. MrpA may be the actual Na(+)/H(+) antiporter, although the six other Mrp proteins are all required for Na(+)/H(+) antiport activity and Na(+) resistance. MrpA is required for initiation of sporulation when external Na(+) concentration increases. Also transports Li(+) but not K(+), Ca(2+) or Mg(2+). This is Na(+)/H(+) antiporter subunit C (mrpC) from Bacillus subtilis (strain 168).